A 335-amino-acid polypeptide reads, in one-letter code: Beta-hexosaminidase (335 aa).

Residues Asp-60, Arg-68, Arg-133, and 163 to 164 (KH) contribute to the substrate site. His-176 (proton donor/acceptor) is an active-site residue. Asp-247 functions as the Nucleophile in the catalytic mechanism.

The protein belongs to the glycosyl hydrolase 3 family. NagZ subfamily. In terms of assembly, monomer.

It is found in the cytoplasm. It catalyses the reaction Hydrolysis of terminal non-reducing N-acetyl-D-hexosamine residues in N-acetyl-beta-D-hexosaminides.. The protein operates within cell wall biogenesis; peptidoglycan recycling. Plays a role in peptidoglycan recycling by cleaving the terminal beta-1,4-linked N-acetylglucosamine (GlcNAc) from peptide-linked peptidoglycan fragments, giving rise to free GlcNAc, anhydro-N-acetylmuramic acid and anhydro-N-acetylmuramic acid-linked peptides. The sequence is that of Beta-hexosaminidase from Xylella fastidiosa (strain 9a5c).